The chain runs to 176 residues: Protein FAM89A (176 aa).

Positions 140–165 (DFQEQGSLRDGQGRGSPGDPSLPLTH) are disordered.

This sequence belongs to the FAM89 family.

The chain is Protein FAM89A (Fam89a) from Rattus norvegicus (Rat).